The chain runs to 537 residues: Tripeptidyl aminopeptidase (537 aa).

A signal peptide spans 1–36 (MRKSSIRRRATAFGTAGALVTATLIAGAVSAPAASA). The propeptide occupies 37 to 39 (APA). One can recognise an AB hydrolase-1 domain in the interval 119–497 (GALIYNPGGP…SRLITERDAG (379 aa)). Ser-245 acts as the Nucleophile in catalysis. Asp-470 is an active-site residue. His-499 functions as the Proton donor in the catalytic mechanism.

It belongs to the peptidase S33 family.

It is found in the secreted. Its function is as follows. Cleaves tripeptides from the N-termini of proteins. Does not cleave mono- or dipeptides, or N-terminally blocked peptides. In Streptomyces lividans, this protein is Tripeptidyl aminopeptidase.